The primary structure comprises 288 residues: 4-diphosphocytidyl-2-C-methyl-D-erythritol kinase (288 aa).

K11 is an active-site residue. 100–110 provides a ligand contact to ATP; the sequence is PTSAGLGSGSS. The active site involves D140.

The protein belongs to the GHMP kinase family. IspE subfamily.

The enzyme catalyses 4-CDP-2-C-methyl-D-erythritol + ATP = 4-CDP-2-C-methyl-D-erythritol 2-phosphate + ADP + H(+). Its pathway is isoprenoid biosynthesis; isopentenyl diphosphate biosynthesis via DXP pathway; isopentenyl diphosphate from 1-deoxy-D-xylulose 5-phosphate: step 3/6. In terms of biological role, catalyzes the phosphorylation of the position 2 hydroxy group of 4-diphosphocytidyl-2C-methyl-D-erythritol. The protein is 4-diphosphocytidyl-2-C-methyl-D-erythritol kinase of Wolbachia sp. subsp. Brugia malayi (strain TRS).